The primary structure comprises 391 residues: Transaldolase (391 aa).

The active-site Schiff-base intermediate with substrate is Lys-134. EF-hand domains lie at Thr-329 to Leu-364 and Asp-365 to Leu-387. Positions 342, 344, 346, 353, 365, 367, 369, 371, and 376 each coordinate Ca(2+).

Belongs to the transaldolase family. Type 1 subfamily.

The protein localises to the cytoplasm. It carries out the reaction D-sedoheptulose 7-phosphate + D-glyceraldehyde 3-phosphate = D-erythrose 4-phosphate + beta-D-fructose 6-phosphate. It participates in carbohydrate degradation; pentose phosphate pathway; D-glyceraldehyde 3-phosphate and beta-D-fructose 6-phosphate from D-ribose 5-phosphate and D-xylulose 5-phosphate (non-oxidative stage): step 2/3. In terms of biological role, transaldolase is important for the balance of metabolites in the pentose-phosphate pathway. In Thermosynechococcus vestitus (strain NIES-2133 / IAM M-273 / BP-1), this protein is Transaldolase.